The sequence spans 804 residues: Cell surface sensor MSB2 (804 aa).

Residues 1–20 (MHNFSKLAVAFVAAASFASA) form the signal peptide. Residues 21–694 (EPETKAKVER…TNQSATQRGT (674 aa)) lie on the Extracellular side of the membrane. A glycan (N-linked (GlcNAc...) asparagine) is linked at Asn-45. 2 stretches are compositionally biased toward low complexity: residues 46–58 (TTTP…SSTS) and 69–80 (SSFSSSASSSSA). Disordered regions lie at residues 46–90 (TTTP…RQPT) and 105–220 (TDST…ATSN). The segment at 46 to 475 (TTTPASEASS…SVAPTSATSS (430 aa)) is serine/threonine rich region (STR). 2 stretches are compositionally biased toward polar residues: residues 81 to 90 (QELTASRQPT) and 109 to 126 (PFSQ…SATG). 2 stretches are compositionally biased toward low complexity: residues 128–143 (VTPI…PSTA) and 150–169 (SALT…SVTS). An N-linked (GlcNAc...) asparagine glycan is attached at Asn-157. Residues 170–188 (PGSTSGPAGTPESSSASDF) are compositionally biased toward polar residues. The span at 189–202 (TSAVATSRASTATS) shows a compositional bias: low complexity. Asn-298, Asn-308, Asn-357, and Asn-393 each carry an N-linked (GlcNAc...) asparagine glycan. Over residues 345–394 (VQTLPPVSTPTANGTVTSPPVDSQTTVLPTTTPGLSSDTIVTSPGVTANS) the composition is skewed to polar residues. The interval 345 to 516 (VQTLPPVSTP…APTVLPSDLP (172 aa)) is disordered. 2 stretches are compositionally biased toward low complexity: residues 395-407 (TQVP…TIPT) and 427-476 (NNTV…TSSA). Residues Asn-427 and Asn-433 are each glycosylated (N-linked (GlcNAc...) asparagine). Positions 482–641 (WLPTTIIVQA…NGMLAHNLTM (160 aa)) are HKR11-MSB2 homology domain (HMH). Over residues 493–508 (LPSTTGSSTNAPSSAP) the composition is skewed to polar residues. Asn-629, Asn-638, Asn-669, Asn-683, and Asn-686 each carry an N-linked (GlcNAc...) asparagine glycan. Positions 658–689 (KPAGAGSGTGGNGSNGPNDVFNNDNNSTNQSA) are disordered. Residues 660–671 (AGAGSGTGGNGS) show a composition bias toward gly residues. Over residues 672–686 (NGPNDVFNNDNNSTN) the composition is skewed to low complexity. A helical transmembrane segment spans residues 695–715 (VAGIAFGAVSLAAAYGAAMFI). The Cytoplasmic portion of the chain corresponds to 716-804 (VARRYKKKRQ…VAQENSLGWN (89 aa)). 2 disordered regions span residues 724–748 (RQAH…PALM) and 762–804 (GVMG…LGWN). The span at 731 to 744 (SSVATPSEMRQSGS) shows a compositional bias: polar residues. Residues 774 to 787 (GSNGSGRSAGNSAR) show a composition bias toward low complexity.

The protein belongs to the HKR1/MSB2 family.

It is found in the cell membrane. The protein localises to the vacuole membrane. Its function is as follows. MSB2 and SHO1 have overlapping functions in recognizing various surface signals for MAPK PMK1 activation and appressorium formation. While MSB2 is critical for sensing surface hydrophobicity and cutin monomers, SHO1 may play a more important role in recognizing rice leaf waxes. The protein is Cell surface sensor MSB2 of Pyricularia oryzae (strain 70-15 / ATCC MYA-4617 / FGSC 8958) (Rice blast fungus).